The sequence spans 333 residues: Phosphate acyltransferase (333 aa).

The protein belongs to the PlsX family. Homodimer. Probably interacts with PlsY.

Its subcellular location is the cytoplasm. The catalysed reaction is a fatty acyl-[ACP] + phosphate = an acyl phosphate + holo-[ACP]. It participates in lipid metabolism; phospholipid metabolism. Its function is as follows. Catalyzes the reversible formation of acyl-phosphate (acyl-PO(4)) from acyl-[acyl-carrier-protein] (acyl-ACP). This enzyme utilizes acyl-ACP as fatty acyl donor, but not acyl-CoA. The polypeptide is Phosphate acyltransferase (Thermosipho melanesiensis (strain DSM 12029 / CIP 104789 / BI429)).